The primary structure comprises 890 residues: tRNase Z TRZ3, mitochondrial (890 aa).

A mitochondrion-targeting transit peptide spans 1-44 (MINSMPYLHKNLRLLRLLSSKSSPFPLSLRPFSPRSFSLSTLFS). The segment at 46 to 67 (SSSSSSMENNEATNGSKSSSNS) is disordered.

The protein belongs to the RNase Z family. Homodimer. Zn(2+) is required as a cofactor. Ca(2+) serves as cofactor. Requires Mn(2+) as cofactor. It depends on Mg(2+) as a cofactor.

The protein localises to the mitochondrion. The protein resides in the nucleus. It catalyses the reaction Endonucleolytic cleavage of RNA, removing extra 3' nucleotides from tRNA precursor, generating 3' termini of tRNAs. A 3'-hydroxy group is left at the tRNA terminus and a 5'-phosphoryl group is left at the trailer molecule.. Functionally, zinc phosphodiesterase, which displays tRNA 3'-processing endonuclease activity. Involved in tRNA maturation, by removing a 3'-trailer from precursor tRNA. Can process the mitochondrial tRNA-like structures (t-elements). Involved in the processing of small nucleolar RNAs (snoRNAs). The sequence is that of tRNase Z TRZ3, mitochondrial from Arabidopsis thaliana (Mouse-ear cress).